Reading from the N-terminus, the 201-residue chain is Holliday junction branch migration complex subunit RuvA (201 aa).

The segment at 1-64 (MIGRLRGELV…EDAHVLYGFA (64 aa)) is domain I. Positions 65-143 (SESERALFRS…SLPAAVTLTG (79 aa)) are domain II. Residues 144–153 (GKPAAAAARA) form a flexible linker region. Residues 153 to 201 (APDPVSDAVSALVSLGYKPQEASRLISAVEGEAERSEDLIRLALKATLK) form a domain III region.

It belongs to the RuvA family. Homotetramer. Forms an RuvA(8)-RuvB(12)-Holliday junction (HJ) complex. HJ DNA is sandwiched between 2 RuvA tetramers; dsDNA enters through RuvA and exits via RuvB. An RuvB hexamer assembles on each DNA strand where it exits the tetramer. Each RuvB hexamer is contacted by two RuvA subunits (via domain III) on 2 adjacent RuvB subunits; this complex drives branch migration. In the full resolvosome a probable DNA-RuvA(4)-RuvB(12)-RuvC(2) complex forms which resolves the HJ.

The protein resides in the cytoplasm. Functionally, the RuvA-RuvB-RuvC complex processes Holliday junction (HJ) DNA during genetic recombination and DNA repair, while the RuvA-RuvB complex plays an important role in the rescue of blocked DNA replication forks via replication fork reversal (RFR). RuvA specifically binds to HJ cruciform DNA, conferring on it an open structure. The RuvB hexamer acts as an ATP-dependent pump, pulling dsDNA into and through the RuvAB complex. HJ branch migration allows RuvC to scan DNA until it finds its consensus sequence, where it cleaves and resolves the cruciform DNA. The protein is Holliday junction branch migration complex subunit RuvA of Thioalkalivibrio sulfidiphilus (strain HL-EbGR7).